Here is a 397-residue protein sequence, read N- to C-terminus: Sexual differentiation process protein isp7 (397 aa).

Residues 255-353 (PTTSIRLLRY…RYTIPFFLQG (99 aa)) enclose the Fe2OG dioxygenase domain.

It belongs to the iron/ascorbate-dependent oxidoreductase family.

The sequence is that of Sexual differentiation process protein isp7 (isp7) from Schizosaccharomyces pombe (strain 972 / ATCC 24843) (Fission yeast).